Here is a 203-residue protein sequence, read N- to C-terminus: Putative 3-methyladenine DNA glycosylase (203 aa).

This sequence belongs to the DNA glycosylase MPG family.

The chain is Putative 3-methyladenine DNA glycosylase from Clostridium botulinum (strain Loch Maree / Type A3).